A 346-amino-acid polypeptide reads, in one-letter code: Methionine import ATP-binding protein MetN 1 (346 aa).

One can recognise an ABC transporter domain in the interval 2 to 241 (IELKNVSKVF…PQHVTTKKFV (240 aa)). 38-45 (GYSGAGKS) lines the ATP pocket.

This sequence belongs to the ABC transporter superfamily. Methionine importer (TC 3.A.1.24) family. In terms of assembly, the complex is composed of two ATP-binding proteins (MetN), two transmembrane proteins (MetI) and a solute-binding protein (MetQ).

Its subcellular location is the cell membrane. It carries out the reaction L-methionine(out) + ATP + H2O = L-methionine(in) + ADP + phosphate + H(+). The enzyme catalyses D-methionine(out) + ATP + H2O = D-methionine(in) + ADP + phosphate + H(+). Its function is as follows. Part of the ABC transporter complex MetNIQ involved in methionine import. Responsible for energy coupling to the transport system. In Bacillus cereus (strain ATCC 14579 / DSM 31 / CCUG 7414 / JCM 2152 / NBRC 15305 / NCIMB 9373 / NCTC 2599 / NRRL B-3711), this protein is Methionine import ATP-binding protein MetN 1.